The following is a 376-amino-acid chain: NIF3-like protein 1 (376 aa).

At Lys108 the chain carries N6-acetyllysine. Residues 243 to 376 (LLLHTGMGRL…ETDRDPLRVV (134 aa)) form a mediates interaction with COPS2 region. Thr254 carries the post-translational modification Phosphothreonine. The residue at position 258 (Ser258) is a Phosphoserine.

The protein belongs to the GTP cyclohydrolase I type 2/NIF3 family. In terms of assembly, homodimer. Interacts with COPS2. Interacts with THOC7. Ubiquitous. Detected in all tissues tested with higher expression in cerebellum, heart and kidney and to a lower level in cerebrum, lung, liver, spleen and muscle.

Its subcellular location is the cytoplasm. The protein resides in the nucleus. May function as a transcriptional corepressor through its interaction with COPS2, negatively regulating the expression of genes involved in neuronal differentiation. This is NIF3-like protein 1 from Mus musculus (Mouse).